The chain runs to 176 residues: Transcription factor E (176 aa).

The region spanning 5–89 (IDQLMKDMAR…YWKANVDQIN (85 aa)) is the HTH TFE/IIEalpha-type domain.

This sequence belongs to the TFE family. In terms of assembly, monomer. Interaction with RNA polymerase subunits RpoF and RpoE is necessary for Tfe stimulatory transcription activity. Able to interact with Tbp and RNA polymerase in the absence of DNA promoter. Interacts both with the preinitiation and elongation complexes.

Transcription factor that plays a role in the activation of archaeal genes transcribed by RNA polymerase. Facilitates transcription initiation by enhancing TATA-box recognition by TATA-box-binding protein (Tbp), and transcription factor B (Tfb) and RNA polymerase recruitment. Not absolutely required for transcription in vitro, but particularly important in cases where Tbp or Tfb function is not optimal. It dynamically alters the nucleic acid-binding properties of RNA polymerases by stabilizing the initiation complex and destabilizing elongation complexes. Seems to translocate with the RNA polymerase following initiation and acts by binding to the non template strand of the transcription bubble in elongation complexes. In Metallosphaera sedula (strain ATCC 51363 / DSM 5348 / JCM 9185 / NBRC 15509 / TH2), this protein is Transcription factor E.